The primary structure comprises 473 residues: Notchless protein homolog (473 aa).

A ubiquitin-like (UBL) domain region spans residues 9–91; it reads GKTVMCLLTD…VLTIVYQQQA (83 aa). WD repeat units follow at residues 107–146, 149–188, 192–236, 239–277, 313–354, 358–399, 400–439, and 442–473; these read GHAE…PLFT, GHKN…LEGS, GHKK…SIIC, GHTL…LIRE, EKQK…QPKK, GHQQ…TVFR, GHVG…LKQD, and GHAD…LWKG. Positions 417–432 match the DWD box motif; it reads LLSGSKDSTLKIWEIR.

The protein belongs to the NLE1/RSA4 family. In terms of assembly, associates with the pre-60S ribosomal particle. As to expression, constitutively and ubiquitously expressed.

It is found in the nucleus. The protein resides in the nucleolus. Required for female gametophyte development. The chain is Notchless protein homolog from Arabidopsis thaliana (Mouse-ear cress).